The sequence spans 90 residues: Probable Fe(2+)-trafficking protein (90 aa).

Belongs to the Fe(2+)-trafficking protein family.

In terms of biological role, could be a mediator in iron transactions between iron acquisition and iron-requiring processes, such as synthesis and/or repair of Fe-S clusters in biosynthetic enzymes. This Polynucleobacter asymbioticus (strain DSM 18221 / CIP 109841 / QLW-P1DMWA-1) (Polynucleobacter necessarius subsp. asymbioticus) protein is Probable Fe(2+)-trafficking protein.